A 24-amino-acid chain; its full sequence is Coenzyme PQQ synthesis protein A (24 aa).

Positions 16-20 (EITMY) form a cross-link, pyrroloquinoline quinone (Glu-Tyr).

Belongs to the PqqA family.

It participates in cofactor biosynthesis; pyrroloquinoline quinone biosynthesis. Functionally, required for coenzyme pyrroloquinoline quinone (PQQ) biosynthesis. PQQ is probably formed by cross-linking a specific glutamate to a specific tyrosine residue and excising these residues from the peptide. In Variovorax paradoxus (strain S110), this protein is Coenzyme PQQ synthesis protein A.